The following is a 332-amino-acid chain: RNA polymerase II holoenzyme cyclin-like subunit (332 aa).

Positions 74 to 175 (RIYCYFLIMK…LIEELQSYMI (102 aa)) constitute a Cyclin N-terminal domain.

This sequence belongs to the cyclin family. Cyclin C subfamily. As to quaternary structure, component of the SRB8-11 complex, a regulatory module of the Mediator complex.

The protein localises to the nucleus. In terms of biological role, component of the SRB8-11 complex. The SRB8-11 complex is a regulatory module of the Mediator complex which is itself involved in regulation of basal and activated RNA polymerase II-dependent transcription. The SRB8-11 complex may be involved in the transcriptional repression of a subset of genes regulated by Mediator. It may inhibit the association of the Mediator complex with RNA polymerase II to form the holoenzyme complex. The SRB8-11 complex phosphorylates the C-terminal domain (CTD) of the largest subunit of RNA polymerase II. This chain is RNA polymerase II holoenzyme cyclin-like subunit (SSN8), found in Eremothecium gossypii (strain ATCC 10895 / CBS 109.51 / FGSC 9923 / NRRL Y-1056) (Yeast).